We begin with the raw amino-acid sequence, 86 residues long: Small ribosomal subunit protein uS15 (86 aa).

The protein belongs to the universal ribosomal protein uS15 family. As to quaternary structure, part of the 30S ribosomal subunit. Forms a bridge to the 50S subunit in the 70S ribosome, contacting the 23S rRNA.

Functionally, one of the primary rRNA binding proteins, it binds directly to 16S rRNA where it helps nucleate assembly of the platform of the 30S subunit by binding and bridging several RNA helices of the 16S rRNA. In terms of biological role, forms an intersubunit bridge (bridge B4) with the 23S rRNA of the 50S subunit in the ribosome. In Vesicomyosocius okutanii subsp. Calyptogena okutanii (strain HA), this protein is Small ribosomal subunit protein uS15.